Here is a 184-residue protein sequence, read N- to C-terminus: Elongation factor P (184 aa).

It belongs to the elongation factor P family.

It localises to the cytoplasm. The protein operates within protein biosynthesis; polypeptide chain elongation. In terms of biological role, involved in peptide bond synthesis. Stimulates efficient translation and peptide-bond synthesis on native or reconstituted 70S ribosomes in vitro. Probably functions indirectly by altering the affinity of the ribosome for aminoacyl-tRNA, thus increasing their reactivity as acceptors for peptidyl transferase. The polypeptide is Elongation factor P (Variovorax paradoxus (strain S110)).